The following is a 334-amino-acid chain: Trans-O-hydroxybenzylidenepyruvate hydratase-aldolase (334 aa).

This sequence belongs to the DapA family.

The catalysed reaction is (3E)-4-(2-hydroxyphenyl)-2-oxobut-3-enoate + H2O = salicylaldehyde + pyruvate. Its pathway is aromatic compound metabolism; naphthalene degradation. Functionally, involved in the naphthalene upper catabolic pathway. Catalyzes the transformation of trans-O-hydroxybenzylidenepyruvate (THBPA) to salicylaldehyde and pyruvate. The reaction is reversible. The chain is Trans-O-hydroxybenzylidenepyruvate hydratase-aldolase (pahE) from Pseudomonas aeruginosa.